Reading from the N-terminus, the 1121-residue chain is Brassinosteroid LRR receptor kinase BRI1 (1121 aa).

Positions 1-24 are cleaved as a signal peptide; it reads MDSLWAAIAALFVAAAVVVRGAAA. Residues 54 to 61 carry the Cys pair 1 motif; sequence CRFPGAGC. LRR repeat units lie at residues 90-114, 116-142, 144-167, 170-193, 197-221, 223-243, 244-268, 269-292, 294-317, 318-341, 343-367, 369-391, 392-415, 416-439, 441-463, 464-487, and 489-511; these read LGSV…GGAR, GSKL…ALAS, CGGL…GGGG, FAGL…RWMV, VGAV…NCSG, QYLD…ALSD, CRGL…IAGL, TSLN…AFAK, QQLT…VASL, PELQ…LCQD, NSKL…VSNC, SLVS…LGDL, GNLQ…LSRI, QGLE…LAKC, KLNW…LGKL, SYLA…LGDC, and SLVW…LAKQ. N-linked (GlcNAc...) asparagine glycosylation is present at asparagine 102. A glycan (N-linked (GlcNAc...) asparagine) is linked at asparagine 151. N-linked (GlcNAc...) asparagine glycosylation is present at asparagine 218. 4 N-linked (GlcNAc...) asparagine glycosylation sites follow: asparagine 251, asparagine 275, asparagine 280, and asparagine 307. 2 N-linked (GlcNAc...) asparagine glycosylation sites follow: asparagine 366 and asparagine 381. Residues asparagine 473 and asparagine 501 are each glycosylated (N-linked (GlcNAc...) asparagine). Position 525 (tyrosine 525) interacts with brassinolide. The stretch at 541-564 is one LRR 18 repeat; it reads GSLLEFTSIRPDDLSRMPSKKLCN. N-linked (GlcNAc...) asparagine glycosylation occurs at asparagine 564. Residue tyrosine 569 participates in brassinolide binding. Asparagine 580 carries an N-linked (GlcNAc...) asparagine glycan. LRR repeat units follow at residues 580 to 603, 604 to 628, 629 to 651, and 652 to 676; these read NGSM…ELGD, MFYL…LAEA, KKLA…SFSA, and LSLS…SLAT. 3 N-linked (GlcNAc...) asparagine glycosylation sites follow: asparagine 658, asparagine 665, and asparagine 684. Residues 689–696 carry the Cys pair 2 motif; sequence CGFPLPPC. The segment at 693-712 is disordered; it reads LPPCDHSSPRSSNDHQSHRR. The chain crosses the membrane as a helical span at residues 719–739; sequence SIAMGLLFSLFCIIVIIIAIG. One can recognise a Protein kinase domain in the interval 807 to 1083; sequence FHIACQIGSG…LKVMAMFKEI (277 aa). ATP is bound by residues 813–821, lysine 835, 881–883, 887–890, 933–938, and aspartate 951; these read IGSGGFGDV, DYM, SLED, and DMKSSN. Aspartate 933 serves as the catalytic Proton acceptor.

Belongs to the protein kinase superfamily. Ser/Thr protein kinase family. As to quaternary structure, interacts with BIP103 and BIP131. Interacts with BAK1. Interacts with BSK3. Interacts with SERK2. Highly expressed in shoots. Expressed at low levels in roots.

It localises to the cell membrane. The enzyme catalyses L-seryl-[protein] + ATP = O-phospho-L-seryl-[protein] + ADP + H(+). It carries out the reaction L-threonyl-[protein] + ATP = O-phospho-L-threonyl-[protein] + ADP + H(+). Functionally, receptor kinase involved brassinosteroid (BR) signal transduction. Regulates, in response to BR binding, a signaling cascade involved in plant development, promotion of cell elongation and flowering. Activates BR signaling by targeting and phosphorylating BSK3, a positive regulator of BR signaling. Forms at the plasma membrane a receptor complex with BAK1 which is activated in response to brassinolide. Phosphorylates BAK1. Phosphorylates REM4.1, which reduces REM4.1 binding affinity to BAK1 and allows the formation and subsequent activation of the BRI1-BAK1 receptor complex. Functions in various growth and developmental processes, such as internode elongation, bending of the lamina joint and skotomorphogenesis. Functions in internode elongation by inducing the formation of the intercalary meristem and the longitudinal elongation of internode cells. Involved in organ development through the control of cell division and elongation. Does not seem essential for organ pattern formation or organ initiation. The protein is Brassinosteroid LRR receptor kinase BRI1 of Oryza sativa subsp. japonica (Rice).